The chain runs to 399 residues: Probable inactive 2-oxoglutarate-dependent dioxygenase AOP2 (399 aa).

One can recognise a Fe2OG dioxygenase domain in the interval 248–345 (GGDDVEANDD…RYTAAIFTCP (98 aa)). Residues His268, Asp270, and His325 each contribute to the Fe cation site. Arg336 lines the 2-oxoglutarate pocket.

The protein belongs to the iron/ascorbate-dependent oxidoreductase family. Requires Fe(2+) as cofactor.

This is Probable inactive 2-oxoglutarate-dependent dioxygenase AOP2 (AOP2) from Arabidopsis thaliana (Mouse-ear cress).